The following is a 776-amino-acid chain: Hepatocyte growth factor-regulated tyrosine kinase substrate (776 aa).

Residues 15 to 143 (ATSQLLLETD…IMKVEGHVFP (129 aa)) form the VHS domain. The FYVE-type zinc finger occupies 160 to 220 (WVDAEECHRC…VCEPCYEQLN (61 aa)). Zn(2+) contacts are provided by Cys-166, Cys-169, Cys-182, Cys-185, Cys-190, and Cys-193. N6-acetyllysine is present on Lys-207. Zn(2+)-binding residues include Cys-212 and Cys-215. Position 216 is a phosphotyrosine (Tyr-216). A disordered region spans residues 223-319 (AEGKAASTTE…SPVNSSAPLA (97 aa)). An interaction with SNX1 region spans residues 225 to 542 (GKAASTTELP…QRLQEQEKER (318 aa)). Residues 258–277 (QEEEELQLALALSQSEAEEK) form the UIM domain. The span at 294-311 (PAPLASSAPPAGSLYSSP) shows a compositional bias: low complexity. 3 positions are modified to phosphotyrosine: Tyr-308, Tyr-329, and Tyr-334. The disordered stretch occupies residues 338 to 401 (KQEEARKSPT…SEQYQNGESE (64 aa)). A compositionally biased stretch (polar residues) spans 379–398 (TDSQPITSCSGPFSEQYQNG). The interaction with SNAP25 and TRAK2 stretch occupies residues 444-542 (SINSTHPQLL…QRLQEQEKER (99 aa)). The interval 453-571 (LELLNRLDER…FPLPYAQLQA (119 aa)) is interaction with STAM. The interval 479-776 (ARGALSALRE…GNETQLISFD (298 aa)) is interaction with NF2. Lys-550 is modified (N6-succinyllysine). Positions 719-776 (GQDASLPAQQPYITGQQPMYQQMAPSTGPPQQQPPVAQPPPTQGPPAQGNETQLISFD) are disordered. Positions 725 to 743 (PAQQPYITGQQPMYQQMAP) are enriched in polar residues. Over residues 745–762 (TGPPQQQPPVAQPPPTQG) the composition is skewed to pro residues. Polar residues predominate over residues 767–776 (GNETQLISFD).

In terms of assembly, component of the ESCRT-0 complex composed of STAM or STAM2 and HGS. Part of a complex at least composed of HSG, STAM2 (or probably STAM) and EPS15. Interacts with STAM. Interacts with STAM2. Interacts with EPS15; the interaction is direct, calcium-dependent and inhibited by SNAP25. Identified in a complex with STAM and LITAF. Found in a complex with STAM and E3 ligase ITCH and DTX3L. Interacts with E3 ligase DTX3L; the interaction brings together STAM and HSG, promotes their recruitment to early endosomes and decreases STAM and HGS ubiquitination by ITCH. Interacts with NF2; the interaction is direct. Interacts with ubiquitin; the interaction is direct. Interacts with VPS37C. Interacts with SMAD1, SMAD2 and SMAD3. Interacts with TSG101; the interaction mediates the association with the ESCRT-I complex. Interacts with SNAP25; the interaction is direct and decreases with addition of increasing concentrations of free calcium. Interacts with SNX1; the interaction is direct. Component of a 550 kDa membrane complex at least composed of HGS and SNX1 but excluding EGFR. Interacts with TRAK2. Interacts with TRAK1. Component of the CART complex, at least composed of ACTN4, HGS/HRS, MYO5B and TRIM3. Interacts (via UIM domain) with UBQLN1 (via ubiquitin-like domain). Interacts with ARRDC3. Identified in a complex containing at least ARRDC4, AVPR2 and HGS. Interacts with LAPTM4B; promotes HGS ubiquitination. Post-translationally, phosphorylated on Tyr-334. This phosphorylation occurs in response to EGF. A minor site of phosphorylation on Tyr-329 is detected. Protein phosphorylation may also be triggered in response to IL-2, GM-CSF and HGF. Ubiquitinated by ITCH. In terms of tissue distribution, ubiquitously expressed.

It is found in the cytoplasm. It localises to the early endosome membrane. The protein localises to the endosome. Its subcellular location is the multivesicular body membrane. Functionally, involved in intracellular signal transduction mediated by cytokines and growth factors. When associated with STAM, it suppresses DNA signaling upon stimulation by IL-2 and GM-CSF. Could be a direct effector of PI3-kinase in vesicular pathway via early endosomes and may regulate trafficking to early and late endosomes by recruiting clathrin. May concentrate ubiquitinated receptors within clathrin-coated regions. Involved in down-regulation of receptor tyrosine kinase via multivesicular body (MVBs) when complexed with STAM (ESCRT-0 complex). The ESCRT-0 complex binds ubiquitin and acts as a sorting machinery that recognizes ubiquitinated receptors and transfers them to further sequential lysosomal sorting/trafficking processes. Involved in receptor recycling via its association with the CART complex, a multiprotein complex required for efficient transferrin receptor recycling but not for EGFR degradation. May contribute to the efficient recruitment of SMADs to the activin receptor complex. The chain is Hepatocyte growth factor-regulated tyrosine kinase substrate (Hgs) from Rattus norvegicus (Rat).